A 333-amino-acid chain; its full sequence is Adenosine deaminase (333 aa).

Residues His12 and His14 each contribute to the Zn(2+) site. His14, Asp16, and Gly170 together coordinate substrate. His197 serves as a coordination point for Zn(2+). Glu200 serves as the catalytic Proton donor. Asp278 is a Zn(2+) binding site. Position 279 (Asp279) interacts with substrate.

This sequence belongs to the metallo-dependent hydrolases superfamily. Adenosine and AMP deaminases family. Adenosine deaminase subfamily. Requires Zn(2+) as cofactor.

It catalyses the reaction adenosine + H2O + H(+) = inosine + NH4(+). It carries out the reaction 2'-deoxyadenosine + H2O + H(+) = 2'-deoxyinosine + NH4(+). Functionally, catalyzes the hydrolytic deamination of adenosine and 2-deoxyadenosine. The chain is Adenosine deaminase from Salmonella paratyphi C (strain RKS4594).